The sequence spans 901 residues: HTH-type transcriptional regulator MalT (901 aa).

Serine 39 to threonine 46 is an ATP binding site. The HTH luxR-type domain maps to glutamate 829–leucine 894. Residues asparagine 853 to arginine 872 constitute a DNA-binding region (H-T-H motif).

The protein belongs to the MalT family. In terms of assembly, monomer in solution. Oligomerizes to an active state in the presence of the positive effectors ATP and maltotriose.

Activated by ATP and maltotriose, which are both required for DNA binding. In terms of biological role, positively regulates the transcription of the maltose regulon whose gene products are responsible for uptake and catabolism of malto-oligosaccharides. Specifically binds to the promoter region of its target genes, recognizing a short DNA motif called the MalT box. This chain is HTH-type transcriptional regulator MalT, found in Salmonella typhi.